The sequence spans 367 residues: Acryloyl-CoA reductase electron transfer subunit beta (367 aa).

305–333 (VYVALGISGAIQHKAGMQDSELIIAVNKD) is a binding site for FAD.

As to quaternary structure, heterohexadecamer; tetramer of tetramers. Each tetramer is composed of 2 alpha (AcrC), a beta (AcrA) and a gamma (AcrB) subunit.

It is found in the cytoplasm. Functionally, part of the ETF-acryloyl-CoA reductase complex involved in the pathway of L-alanine fermentation. The electron transfer flavoprotein (ETF) serves as a specific electron acceptor for acryloyl-CoA reductase. This Anaerotignum propionicum (Clostridium propionicum) protein is Acryloyl-CoA reductase electron transfer subunit beta (acrA).